The primary structure comprises 63 residues: Large ribosomal subunit protein uL29 (63 aa).

Belongs to the universal ribosomal protein uL29 family.

The polypeptide is Large ribosomal subunit protein uL29 (Shigella flexneri).